We begin with the raw amino-acid sequence, 611 residues long: uncharacterized protein (611 aa).

An SAC domain is found at 51–351 (LYGFIRLKIY…DYHKQGSRNL (301 aa)).

The protein to yeast RSD1 and S.pombe SpBC19F5.03.

This is an uncharacterized protein from Schizosaccharomyces pombe (strain 972 / ATCC 24843) (Fission yeast).